The chain runs to 986 residues: Epidermin biosynthesis protein EpiB (986 aa).

To B.subtilis SpaB and L.lactis NisB.

Its subcellular location is the cell membrane. In terms of biological role, involved in the post-translational modification of the lantibiotic epidermin. This Staphylococcus epidermidis protein is Epidermin biosynthesis protein EpiB (epiB).